The primary structure comprises 393 residues: Beta-ureidopropionase (393 aa).

A CN hydrolase domain is found at 72 to 344 (VRVGLVQNRI…DGLLVTELNL (273 aa)). The active-site Proton acceptor is E119. The active-site Proton donor is K196. Residue C233 is the Nucleophile of the active site. S378 is subject to Phosphoserine.

This sequence belongs to the carbon-nitrogen hydrolase superfamily. BUP family. Homodimer, homotetramer, homooctamer; can also form higher homooligomers.

Its subcellular location is the cytoplasm. The enzyme catalyses 3-(carbamoylamino)propanoate + H2O + 2 H(+) = beta-alanine + NH4(+) + CO2. It catalyses the reaction 3-(carbamoylamino)-2-methylpropanoate + H2O + 2 H(+) = (R)-3-amino-2-methylpropanoate + NH4(+) + CO2. Its pathway is amino-acid biosynthesis; beta-alanine biosynthesis. Catalyzes a late step in pyrimidine degradation. Converts N-carbamoyl-beta-alanine (3-ureidopropanoate) into beta-alanine, ammonia and carbon dioxide. Likewise, converts N-carbamoyl-beta-aminoisobutyrate (3-ureidoisobutyrate) into beta-aminoisobutyrate, ammonia and carbon dioxide. The protein is Beta-ureidopropionase (Upb1) of Mus musculus (Mouse).